A 138-amino-acid chain; its full sequence is Superoxide dismutase [Mn] (138 aa).

Mn(2+)-binding residues include Gln1, His49, Asp133, and His137.

It belongs to the iron/manganese superoxide dismutase family. The cofactor is Mn(2+).

The catalysed reaction is 2 superoxide + 2 H(+) = H2O2 + O2. Functionally, destroys superoxide anion radicals which are normally produced within the cells and which are toxic to biological systems. This chain is Superoxide dismutase [Mn] (sodA), found in Mycobacteroides chelonae (Mycobacterium chelonae).